Consider the following 41-residue polypeptide: MKVRNSLKSLRSRHRNNRLVRRKGRVYVINKVQRRFKARQG.

Belongs to the bacterial ribosomal protein bL36 family.

In Rhodopseudomonas palustris (strain BisA53), this protein is Large ribosomal subunit protein bL36.